Consider the following 206-residue polypeptide: Xanthine phosphoribosyltransferase (206 aa).

Residues Leu-28 and Asn-35 each coordinate xanthine. 136–140 (ANGQA) is a binding site for 5-phospho-alpha-D-ribose 1-diphosphate. Lys-164 provides a ligand contact to xanthine.

This sequence belongs to the purine/pyrimidine phosphoribosyltransferase family. Xpt subfamily. In terms of assembly, homodimer.

The protein localises to the cytoplasm. The catalysed reaction is XMP + diphosphate = xanthine + 5-phospho-alpha-D-ribose 1-diphosphate. It functions in the pathway purine metabolism; XMP biosynthesis via salvage pathway; XMP from xanthine: step 1/1. Functionally, converts the preformed base xanthine, a product of nucleic acid breakdown, to xanthosine 5'-monophosphate (XMP), so it can be reused for RNA or DNA synthesis. This chain is Xanthine phosphoribosyltransferase, found in Oenococcus oeni (strain ATCC BAA-331 / PSU-1).